A 223-amino-acid polypeptide reads, in one-letter code: Kinetochore protein Spc25 (223 aa).

The stretch at Leu65–Ser115 forms a coiled coil.

Belongs to the SPC25 family. In terms of assembly, component of the Ndc80 complex, which is composed of Ndc80, Nuf2 and Spc25.

It is found in the nucleus. The protein resides in the chromosome. It localises to the centromere. Its subcellular location is the kinetochore. In terms of biological role, acts as a component of the essential kinetochore-associated Ndc80 complex, which is required for chromosome segregation and spindle checkpoint activity during meiosis and mitosis. Required for kinetochore integrity and the organization of stable microtubule binding sites in the outer plate of the kinetochore. Participates in SAC signaling that responds specifically to disruptions in spindle microtubule dynamics. The NDC80 complex synergistically enhances the affinity of the SKA1 complex for microtubules and may allow the NDC80 complex to track depolymerizing microtubules. The polypeptide is Kinetochore protein Spc25 (Drosophila lutescens (Fruit fly)).